The sequence spans 32 residues: Hemocyanin C chain (32 aa).

This sequence belongs to the tyrosinase family. Hemocyanin subfamily. As to expression, hemolymph.

It is found in the secreted. It localises to the extracellular space. Hemocyanins are copper-containing oxygen carriers occurring freely dissolved in the hemolymph of many mollusks and arthropods. The protein is Hemocyanin C chain of Cherax destructor (Common yabby crayfish).